The sequence spans 502 residues: Solute carrier family 2, facilitated glucose transporter member 5 (502 aa).

Position 1 is an N-acetylmethionine (Met1). The Cytoplasmic segment spans residues 1-17 (MEKEDQEKTGKLTLVLA). Residues 18–38 (LATFLAAFGSSFQYGYNVAAV) form a helical membrane-spanning segment. Tyr31 is a D-fructose binding site. The Extracellular portion of the chain corresponds to 39 to 67 (NSPSEFMQQFYNDTYYDRNKENIESFTLT). Residue Asn50 is glycosylated (N-linked (GlcNAc...) asparagine). Residues 68–90 (LLWSLTVSMFPFGGFIGSLMVGF) traverse the membrane as a helical segment. Topologically, residues 91-97 (LVNNLGR) are cytoplasmic. A helical transmembrane segment spans residues 98 to 118 (KGALLFNNIFSILPAILMGCS). Topologically, residues 119-125 (KIAKSFE) are extracellular. The chain crosses the membrane as a helical span at residues 126-148 (IIIASRLLVGICAGISSNVVPMY). Topologically, residues 149–160 (LGELAPKNLRGA) are cytoplasmic. Residues 161 to 181 (LGVVPQLFITVGILVAQLFGL) form a helical membrane-spanning segment. Gln166 is a D-fructose binding site. The Extracellular segment spans residues 182–191 (RSVLASEEGW). Residues 192-212 (PILLGLTGVPAGLQLLLLPFF) traverse the membrane as a helical segment. Topologically, residues 213–276 (PESPRYLLIQ…LFRMQSLRWQ (64 aa)) are cytoplasmic. Residues 277 to 297 (LISTIVLMAGQQLSGVNAIYY) form a helical membrane-spanning segment. D-fructose contacts are provided by residues Gln287 and 295–297 (IYY). Topologically, residues 298–312 (YADQIYLSAGVKSND) are extracellular. A helical membrane pass occupies residues 313–333 (VQYVTAGTGAVNVFMTMVTVF). Over 334-341 (VVELWGRR) the chain is Cytoplasmic. A helical membrane pass occupies residues 342–362 (NLLLIGFSTCLTACIVLTVAL). The Extracellular portion of the chain corresponds to 363-370 (ALQNTISW). A helical membrane pass occupies residues 371 to 393 (MPYVSIVCVIVYVIGHAVGPSPI). D-fructose is bound at residue His386. At 394 to 411 (PALFITEIFLQSSRPSAY) the chain is on the cytoplasmic side. The chain crosses the membrane as a helical span at residues 412 to 432 (MIGGSVHWLSNFIVGLIFPFI). 418-419 (HW) is a D-fructose binding site. The Extracellular segment spans residues 433-438 (QVGLGP). The chain crosses the membrane as a helical span at residues 439–459 (YSFIIFAIICLLTTIYIFMVV). At 460–502 (PETKGRTFVEINQIFAKKNKVSDVYPEKEEKELNDLPPATREQ) the chain is on the cytoplasmic side.

It belongs to the major facilitator superfamily. Sugar transporter (TC 2.A.1.1) family. Glucose transporter subfamily. Detected in jejunum. Detected in kidney, skeletal muscle, brain and adipose tissue (at protein level). Detected in small intestine and in kidney, and at much lower levels in brain. Detected in enterocytes in duodenum, jejunum, and ileum.

The protein resides in the apical cell membrane. It is found in the cell membrane. The protein localises to the sarcolemma. The catalysed reaction is D-fructose(out) = D-fructose(in). Its activity is regulated as follows. Fructose uptake is inhibited by mercury ions. Fructose uptake is only slightly inhibited by cytochalasin B. Its function is as follows. Functions as a fructose transporter that has only low activity with other monosaccharides. Can mediate the uptake of deoxyglucose, but with low efficiency. Essential for fructose uptake in the small intestine. Plays a role in the regulation of salt uptake and blood pressure in response to dietary fructose. Required for the development of high blood pressure in response to high dietary fructose intake. The polypeptide is Solute carrier family 2, facilitated glucose transporter member 5 (Rattus norvegicus (Rat)).